The chain runs to 967 residues: Protein moonraker (967 aa).

Residues 178 to 201 form a disordered region; the sequence is SHPGQSDLTVPNSPPTHDPGLQPH. Over residues 179–188 the composition is skewed to polar residues; that stretch reads HPGQSDLTVP. 2 positions are modified to phosphoserine: S287 and S409. Disordered stretches follow at residues 401-431 and 490-601; these read ALER…SRPS and KAGK…SHLT. The span at 525 to 543 shows a compositional bias: polar residues; the sequence is QSQPHSKSRVQQTTVSSRL. Positions 557–568 are enriched in pro residues; the sequence is WIPPNPTSPPAS. Residues 616 to 642 are a coiled coil; it reads AETSKRLKELEELKAKEIDSMQKQRLD. Residues S700 and S826 each carry the phosphoserine modification. The interval 849 to 872 is disordered; the sequence is RPCNGNSLDESVGTEEGSEKREAP. The segment at 885-967 is necessary and sufficient for CEP20-binding; sequence GRAPLFVPPG…FTSEFLEAAT (83 aa).

Interacts with CEP63. Interacts with WDR62. Forms a complex with OFD1 and CEP20/FOR20. Interacts with PCM1.

It is found in the cytoplasm. The protein resides in the cytoskeleton. Its subcellular location is the microtubule organizing center. It localises to the centrosome. The protein localises to the centriole. It is found in the centriolar satellite. In terms of biological role, involved in centriole duplication. Positively regulates CEP63 centrosomal localization. Required for WDR62 centrosomal localization and promotes the centrosomal localization of CDK2. May play a role in cilium assembly. In Homo sapiens (Human), this protein is Protein moonraker (KIAA0753).